The chain runs to 147 residues: Ubiquitin-conjugating enzyme E2 D3 (147 aa).

A UBC core domain is found at 1 to 147 (MALKRINKEL…SREWTQKYAM (147 aa)). Residues cysteine 21 and cysteine 107 are joined by a disulfide bond. The active-site Glycyl thioester intermediate is cysteine 85.

It belongs to the ubiquitin-conjugating enzyme family. Interacts with SCF (SKP1-CUL1-F-box protein) E3 ubiquitin ligase complex; when Cullin is neddylated, the interaction between the E2 and the SCF complex is strengthened. Interacts with DAPK3. Interacts with BRCA1; the DNA damage checkpoint promotes the association with BRCA1 after ionizing radiation. Interacts non-covalently with ubiquitin. Interacts with E3 ubiquitin-protein ligase CBLC. Interacts with UBTD1. Interacts with RIGI and RNF135; involved in RIGI ubiquitination and activation. Post-translationally, phosphorylated by AURKB.

The protein localises to the cell membrane. The protein resides in the endosome membrane. The catalysed reaction is S-ubiquitinyl-[E1 ubiquitin-activating enzyme]-L-cysteine + [E2 ubiquitin-conjugating enzyme]-L-cysteine = [E1 ubiquitin-activating enzyme]-L-cysteine + S-ubiquitinyl-[E2 ubiquitin-conjugating enzyme]-L-cysteine.. It catalyses the reaction S-ubiquitinyl-[E1 ubiquitin-activating enzyme]-L-cysteine + [acceptor protein]-L-lysine = [E1 ubiquitin-activating enzyme]-L-cysteine + N(6)-monoubiquitinyl-[acceptor protein]-L-lysine.. It participates in protein modification; protein ubiquitination. Functionally, accepts ubiquitin from the E1 complex and catalyzes its covalent attachment to other proteins. In vitro catalyzes 'Lys-11'-, as well as 'Lys-48'-linked polyubiquitination. Cooperates with the E2 CDC34 and the SCF(FBXW11) E3 ligase complex for the polyubiquitination of NFKBIA leading to its subsequent proteasomal degradation. Acts as an initiator E2, priming the phosphorylated NFKBIA target at positions 'Lys-21' and/or 'Lys-22' with a monoubiquitin. Ubiquitin chain elongation is then performed by CDC34, building ubiquitin chains from the UBE2D3-primed NFKBIA-linked ubiquitin. Also acts as an initiator E2, in conjunction with RNF8, for the priming of PCNA. Monoubiquitination of PCNA, and its subsequent polyubiquitination, are essential events in the operation of the DNA damage tolerance (DDT) pathway that is activated after DNA damage caused by UV or chemical agents during S-phase. Associates with the BRCA1/BARD1 E3 ligase complex to perform ubiquitination at DNA damage sites following ionizing radiation leading to DNA repair. Targets DAPK3 for ubiquitination which influences promyelocytic leukemia protein nuclear body (PML-NB) formation in the nucleus. In conjunction with the MDM2 and TOPORS E3 ligases, functions ubiquitination of p53/TP53. In conjunction with the CBL E3 ligase, targets EGFR for polyubiquitination at the plasma membrane as well as during its internalization and transport on endosomes. In conjunction with the STUB1 E3 quality control E3 ligase, ubiquitinates unfolded proteins to catalyze their immediate destruction. Together with RNF135, catalyzes the viral RNA-dependent 'Lys-63'-linked polyubiquitination of RIGI to activate the downstream signaling pathway that leads to interferon beta production. Together with ZNF598, catalyzes ubiquitination of 40S ribosomal proteins in response to ribosome collisions. In cooperation with the GATOR2 complex, catalyzes 'Lys-6'-linked ubiquitination of NPRL2. The chain is Ubiquitin-conjugating enzyme E2 D3 (UBE2D3) from Homo sapiens (Human).